The chain runs to 353 residues: Rhodopsin (353 aa).

Residues 1–36 are Extracellular-facing; it reads MNGTEGPFFYVPMVNTTGIVRSPYEYPQYYLVNPAA. N2 and N15 each carry an N-linked (GlcNAc...) asparagine glycan. Residues 37–61 traverse the membrane as a helical segment; sequence YAALGAYMFLLILVGFPINFLTLYV. At 62 to 73 the chain is on the cytoplasmic side; that stretch reads TIEHKKLRTPLN. A helical transmembrane segment spans residues 74–96; that stretch reads YILLNLAVADLFMVLGGFTTTMY. The Extracellular segment spans residues 97-110; sequence TSMHGYFVLGRLGC. C110 and C187 form a disulfide bridge. A helical membrane pass occupies residues 111–133; it reads NIEGFFATLGGEIALWSLVVLAI. A 'Ionic lock' involved in activated form stabilization motif is present at residues 134–136; the sequence is ERW. Residues 134–152 are Cytoplasmic-facing; sequence ERWVVVCKPISNFRFGENH. The helical transmembrane segment at 153 to 173 threads the bilayer; the sequence is AIMGLAFTWTMAMACAAPPLV. The Extracellular segment spans residues 174-202; that stretch reads GWSRYIPEGMQCSCGIDYYTRAEGFNNES. N-linked (GlcNAc...) asparagine glycosylation occurs at N200. Residues 203-224 form a helical membrane-spanning segment; it reads FVIYMFICHFTIPLTVVFFCYG. At 225–252 the chain is on the cytoplasmic side; that stretch reads RLLCAVKEAAAAQQESETTQRAEKEVTR. The chain crosses the membrane as a helical span at residues 253-274; the sequence is MVIMMVIAFLVCWLPYASVAWY. The Extracellular portion of the chain corresponds to 275–286; that stretch reads IFTHQGSEFGPV. A helical membrane pass occupies residues 287 to 308; that stretch reads FMTIPAFFAKSSSIYNPMIYIC. Residue K296 is modified to N6-(retinylidene)lysine. At 309–353 the chain is on the cytoplasmic side; that stretch reads LNKQFRHCMITTLCCGKNPFEEEEGASTASKTEASSVSSSSVSPA. S-palmitoyl cysteine attachment occurs at residues C322 and C323. Residues 331-353 are disordered; it reads EEGASTASKTEASSVSSSSVSPA. The segment covering 334–353 has biased composition (low complexity); the sequence is ASTASKTEASSVSSSSVSPA.

The protein belongs to the G-protein coupled receptor 1 family. Opsin subfamily. Post-translationally, phosphorylated on some or all of the serine and threonine residues present in the C-terminal region. Contains one covalently linked retinal chromophore.

It is found in the membrane. Its subcellular location is the cell projection. The protein localises to the cilium. It localises to the photoreceptor outer segment. In terms of biological role, photoreceptor required for image-forming vision at low light intensity. While most salt water fish species use retinal as chromophore, most freshwater fish use 3-dehydroretinal, or a mixture of retinal and 3-dehydroretinal. Light-induced isomerization of 11-cis to all-trans retinal triggers a conformational change that activates signaling via G-proteins. Subsequent receptor phosphorylation mediates displacement of the bound G-protein alpha subunit by arrestin and terminates signaling. In Diplodus annularis (Annular seabream), this protein is Rhodopsin (rho).